Consider the following 362-residue polypeptide: MGGRYKIAVLPGDGIGTEIVQVGVAMLEAAARRFDFAFDFEEAPIGGAAIDATGEPLPAATLELCKASDAVFLGAVGGPQWDTLPSDKRPEKALLGLRAGLGLFANLRPARILPQLVAASALKPEVVEGVDILVVRELTGGLYFGIPKGIFPEKKGGRRGVNTMSYSAFEIERIGRVAFEAARERRGKLCSVDKANVLEVSQLWREVLVGLAPEYPDVELTHMYVDNCAMQLVRRPRQFDTIVTENMFGDILSDEAAMLTGSIGMLPSASLGSGGPGLYEPVHGSAPDIAGQDKANPLAQVLSGAMLLRHSLRQPEAAQAVERAVQTVLEQGYRTGDIAAPGAQIVGCRAMGEQLLAAFERA.

NAD(+) is bound at residue 78–91 (GPQWDTLPSDKRPE). R98, R108, R136, and D226 together coordinate substrate. Residues D226, D250, and D254 each coordinate Mg(2+). Residue 284–296 (GSAPDIAGQDKAN) participates in NAD(+) binding.

It belongs to the isocitrate and isopropylmalate dehydrogenases family. LeuB type 1 subfamily. In terms of assembly, homodimer. Requires Mg(2+) as cofactor. It depends on Mn(2+) as a cofactor.

Its subcellular location is the cytoplasm. The enzyme catalyses (2R,3S)-3-isopropylmalate + NAD(+) = 4-methyl-2-oxopentanoate + CO2 + NADH. It functions in the pathway amino-acid biosynthesis; L-leucine biosynthesis; L-leucine from 3-methyl-2-oxobutanoate: step 3/4. Its function is as follows. Catalyzes the oxidation of 3-carboxy-2-hydroxy-4-methylpentanoate (3-isopropylmalate) to 3-carboxy-4-methyl-2-oxopentanoate. The product decarboxylates to 4-methyl-2 oxopentanoate. The polypeptide is 3-isopropylmalate dehydrogenase (Gloeobacter violaceus (strain ATCC 29082 / PCC 7421)).